Consider the following 72-residue polypeptide: Small ribosomal subunit protein bS18 (72 aa).

This sequence belongs to the bacterial ribosomal protein bS18 family. In terms of assembly, part of the 30S ribosomal subunit. Forms a tight heterodimer with protein bS6.

In terms of biological role, binds as a heterodimer with protein bS6 to the central domain of the 16S rRNA, where it helps stabilize the platform of the 30S subunit. The protein is Small ribosomal subunit protein bS18 of Fusobacterium nucleatum subsp. nucleatum (strain ATCC 25586 / DSM 15643 / BCRC 10681 / CIP 101130 / JCM 8532 / KCTC 2640 / LMG 13131 / VPI 4355).